Reading from the N-terminus, the 209-residue chain is Large ribosomal subunit protein uL3 (209 aa).

The tract at residues 141–163 (RAVGSMGASSDPSRTFKNKRMPG) is disordered.

Belongs to the universal ribosomal protein uL3 family. Part of the 50S ribosomal subunit. Forms a cluster with proteins L14 and L19.

In terms of biological role, one of the primary rRNA binding proteins, it binds directly near the 3'-end of the 23S rRNA, where it nucleates assembly of the 50S subunit. The protein is Large ribosomal subunit protein uL3 of Clostridium botulinum (strain Kyoto / Type A2).